The chain runs to 647 residues: Zinc transporter ZIP4 (647 aa).

The first 22 residues, 1-22 (MASLVSLELGLLLAVLVVTATA), serve as a signal peptide directing secretion. Residues 23-327 (SPPAGLLSLL…QDQLSQSERY (305 aa)) are Extracellular-facing. 3 cysteine pairs are disulfide-bonded: Cys57–Cys62, Cys65–Cys111, and Cys160–Cys195. The tract at residues 236-255 (EAHSDHSHRHRGASSRDPVP) is disordered. N-linked (GlcNAc...) asparagine glycosylation occurs at Asn261. Cys270 and Cys309 form a disulfide bridge. Residues 328 to 348 (LYGSLATLLICLCAVFGLLLL) traverse the membrane as a helical segment. Residues 349-359 (TCTGCRGVTHY) lie on the Cytoplasmic side of the membrane. Residues 360–380 (ILQTFLSLAVGAVTGDAVLHL) traverse the membrane as a helical segment. The Extracellular portion of the chain corresponds to 381–402 (TPKVLGLHTHSEEGLSPQPTWR). A helical membrane pass occupies residues 403 to 423 (LLAMLAGLYAFFLFENLFNLL). The Cytoplasmic portion of the chain corresponds to 424–498 (LPRDPEDLED…LSPELRLLPY (75 aa)). Positions 452–454 (LQL) match the Essential for SLC39A4 endocytosis motif. Residues 458–484 (ELRQPKPPHEGSRADLVAEESPELLNP) form a disordered region. Basic and acidic residues predominate over residues 460-470 (RQPKPPHEGSR). A helical membrane pass occupies residues 499-518 (MITLGDAVHNFADGLAVGAA). His507, Asn508, and Asp511 together coordinate Zn(2+). Residues 519–526 (FASSWKTG) are Extracellular-facing. A helical transmembrane segment spans residues 527–553 (LATSLAVFCHELPHELGDFAALLHAGL). Residues His536, Glu537, and His540 each contribute to the Zn(2+) site. At 554–558 (SVRQA) the chain is on the cytoplasmic side. Residues 559–579 (LLLNLASALTAFAGLYVALAV) form a helical membrane-spanning segment. The Extracellular portion of the chain corresponds to 580-586 (GVSEESE). The helical transmembrane segment at 587-607 (AWILAVATGLFLYVALCDMLP) threads the bilayer. Residues 608-617 (AMLKVRDPRP) are Cytoplasmic-facing. The chain crosses the membrane as a helical span at residues 618–638 (WLLFLLHNVGLLGGWTVLLLL). The Extracellular segment spans residues 639-647 (SLYEDDITF).

It belongs to the ZIP transporter (TC 2.A.5) family. In terms of assembly, homodimer; homodimerization is mediated by the transmembrane domain. The extracellular N-terminal ectodomain is cleaved when cells are Zn(2+) deficient, N-terminally cleaved SLC39A4 is internalized at a faster rate. In terms of processing, under excess Zn(2+) conditions, SLC39A4 on the cell surface is rapidly endocytosed, ubiquitinated and degraded. Post-translationally, glycosylated. Highly expressed in kidney, small intestine, stomach, colon, jejunum and duodenum.

The protein localises to the cell membrane. Its subcellular location is the recycling endosome membrane. The protein resides in the apical cell membrane. The enzyme catalyses Zn(2+)(in) = Zn(2+)(out). The Zn(2+) uniporter activity is regulated by zinc availability. Extracellular acidification stimulated SLC39A4-dependent Zn(2+) uptake. Selective transporter that mediates the uptake of Zn(2+). Plays an essential role for dietary zinc uptake from small intestine. The Zn(2+) uniporter activity is regulated by zinc availability. Also exhibits polyspecific binding and transport of Cu(2+), Cd(2+) and possibly Ni(2+) but at higher concentrations. This Homo sapiens (Human) protein is Zinc transporter ZIP4.